We begin with the raw amino-acid sequence, 146 residues long: Angiogenin (146 aa).

A signal peptide spans Met-1–Ala-24. At Gln-25 the chain carries Pyrrolidone carboxylic acid. His-37 functions as the Proton acceptor in the catalytic mechanism. Arg-45 contacts tRNA. Cystine bridges form between Cys-50-Cys-105, Cys-63-Cys-116, and Cys-81-Cys-131. A Nucleolar localization signal motif is present at residues Arg-55–Met-59. TRNA-binding residues include Cys-105 and Ile-127. The active-site Proton donor is the His-138.

It belongs to the pancreatic ribonuclease family. In terms of assembly, homodimer. Interacts with RNH1; inhibiting ANG ribonuclease activity. Interacts with PCNA.

The protein localises to the secreted. It is found in the nucleus. The protein resides in the nucleolus. Its subcellular location is the cytoplasm. It localises to the stress granule. Its activity is regulated as follows. Has weak tRNA ribonuclease activity by itself due to partial autoinhibition by its C-terminus, which folds into a short alpha-helix that partially occludes the substrate-binding site. In absence of stress, the ribonuclease activity is inhibited by RNH1 in the cytoplasm. In response to stress, dissociates from RNH1 in the cytoplasm and associates with cytoplasmic ribosomes with vacant A-sites: ribosomes directly activate the tRNA ribonuclease activity of ANG by refolding the C-terminal alpha-helix. In response to stress, the angiogenic activity of ANG is inhibited by RNH1 in the nucleus. Its function is as follows. Secreted ribonuclease that can either promote or restrict cell proliferation of target cells, depending on the context. Endocytosed in target cells via its receptor PLXNB2 and translocates to the cytoplasm or nucleus. Under stress conditions, localizes to the cytoplasm and promotes the assembly of stress granules (SGs): specifically cleaves a subset of tRNAs within anticodon loops to produce tRNA-derived stress-induced fragments (tiRNAs), resulting in translation repression and inhibition of cell proliferation. tiRNas also prevent formation of apoptosome, thereby promoting cell survival. Preferentially cleaves RNAs between a pyrimidine and an adenosine residue, suggesting that it cleaves the anticodon loop of tRNA(Ala) (32-UUAGCAU-38) after positions 33 and 36. Cleaves a subset of tRNAs, including tRNA(Ala), tRNA(Glu), tRNA(Gly), tRNA(Lys), tRNA(Val), tRNA(His), tRNA(Asp) and tRNA(Sec). Under growth conditions and in differentiated cells, translocates to the nucleus and stimulates ribosomal RNA (rRNA) transcription, including that containing the initiation site sequences of 45S rRNA, thereby promoting cell growth and proliferation. Angiogenin induces vascularization of normal and malignant tissues via its ability to promote rRNA transcription. Involved in hematopoietic stem and progenitor cell (HSPC) growth and survival by promoting rRNA transcription in growth conditions and inhibiting translation in response to stress, respectively. Mediates the crosstalk between myeloid and intestinal epithelial cells to protect the intestinal epithelial barrier integrity: secreted by myeloid cells and promotes intestinal epithelial cells proliferation and survival. Also mediates osteoclast-endothelial cell crosstalk in growing bone: produced by osteoclasts and protects the neighboring vascular cells against senescence by promoting rRNA transcription. This Miopithecus talapoin (Angolan talapoin) protein is Angiogenin (ANG).